Reading from the N-terminus, the 713-residue chain is Polyphosphate kinase (713 aa).

An ATP-binding site is contributed by Asn63. Mg(2+) contacts are provided by Arg394 and Arg424. His454 serves as the catalytic Phosphohistidine intermediate. Positions 487, 583, and 611 each coordinate ATP.

It belongs to the polyphosphate kinase 1 (PPK1) family. It depends on Mg(2+) as a cofactor. An intermediate of this reaction is the autophosphorylated ppk in which a phosphate is covalently linked to a histidine residue through a N-P bond.

It carries out the reaction [phosphate](n) + ATP = [phosphate](n+1) + ADP. Catalyzes the reversible transfer of the terminal phosphate of ATP to form a long-chain polyphosphate (polyP). The chain is Polyphosphate kinase from Prosthecochloris aestuarii (strain DSM 271 / SK 413).